The following is a 126-amino-acid chain: Small ribosomal subunit protein uS13 (126 aa).

The interval 96–126 is disordered; that stretch reads LPVHGQRTHTNARTRKGPRRAIAGKKKAGKK.

Belongs to the universal ribosomal protein uS13 family. Part of the 30S ribosomal subunit. Forms a loose heterodimer with protein S19. Forms two bridges to the 50S subunit in the 70S ribosome.

Located at the top of the head of the 30S subunit, it contacts several helices of the 16S rRNA. In the 70S ribosome it contacts the 23S rRNA (bridge B1a) and protein L5 of the 50S subunit (bridge B1b), connecting the 2 subunits; these bridges are implicated in subunit movement. Contacts the tRNAs in the A and P-sites. In Frankia alni (strain DSM 45986 / CECT 9034 / ACN14a), this protein is Small ribosomal subunit protein uS13.